The primary structure comprises 757 residues: Endonuclease MutS2 (757 aa).

321–328 (GPNMGGKT) provides a ligand contact to ATP. Residues 681-756 (IDIRGMTVEE…GTGVTVVEVK (76 aa)) form the Smr domain.

The protein belongs to the DNA mismatch repair MutS family. MutS2 subfamily. Homodimer. Binds to stalled ribosomes, contacting rRNA. Interacts with MutL.

Nuclease activity is stimulated by interaction with MutL and inhibited in the presence of non-hydrolytic ATP (ADPnP). ATPase activity is stimulated by DNA. Endonuclease that is involved in the suppression of homologous recombination and thus may have a key role in the control of bacterial genetic diversity. Has ATPase activity. Binds to DNA. In terms of biological role, acts as a ribosome collision sensor, splitting the ribosome into its 2 subunits. Detects stalled/collided 70S ribosomes which it binds and splits by an ATP-hydrolysis driven conformational change. Acts upstream of the ribosome quality control system (RQC), a ribosome-associated complex that mediates the extraction of incompletely synthesized nascent chains from stalled ribosomes and their subsequent degradation. Probably generates substrates for RQC. This chain is Endonuclease MutS2, found in Thermotoga maritima (strain ATCC 43589 / DSM 3109 / JCM 10099 / NBRC 100826 / MSB8).